The sequence spans 447 residues: Signal recognition particle protein (447 aa).

GTP is bound by residues G108–T115, D190–R194, and T248–D251.

It belongs to the GTP-binding SRP family. SRP54 subfamily. In terms of assembly, part of the signal recognition particle protein translocation system, which is composed of SRP and FtsY. Interacts with RNA.

The protein resides in the cytoplasm. It carries out the reaction GTP + H2O = GDP + phosphate + H(+). Functionally, involved in targeting and insertion of nascent membrane proteins into the cytoplasmic membrane. Binds to the hydrophobic signal sequence of the ribosome-nascent chain (RNC) as it emerges from the ribosomes. The SRP-RNC complex is then targeted to the cytoplasmic membrane where it interacts with the SRP receptor FtsY. This Mycoplasma mycoides protein is Signal recognition particle protein.